A 265-amino-acid chain; its full sequence is Phosphate import ATP-binding protein PstB (265 aa).

Residues 18-260 enclose the ABC transporter domain; it reads IAAKGVNVYY…PEDPRTESYI (243 aa). 50–57 provides a ligand contact to ATP; sequence GPSGCGKS.

The protein belongs to the ABC transporter superfamily. Phosphate importer (TC 3.A.1.7) family. As to quaternary structure, the complex is composed of two ATP-binding proteins (PstB), two transmembrane proteins (PstC and PstA) and a solute-binding protein (PstS).

The protein localises to the cell inner membrane. The enzyme catalyses phosphate(out) + ATP + H2O = ADP + 2 phosphate(in) + H(+). In terms of biological role, part of the ABC transporter complex PstSACB involved in phosphate import. Responsible for energy coupling to the transport system. The chain is Phosphate import ATP-binding protein PstB from Ruegeria sp. (strain TM1040) (Silicibacter sp.).